Consider the following 869-residue polypeptide: Speckle targeted PIP5K1A-regulated poly(A) polymerase (869 aa).

The Matrin-type zinc finger occupies 16-46 (FRCCLCDVTTANRPSLDAHLKGRKHRDLVQL). The RRM domain occupies 56–128 (RSVFVSGFPR…HGLRVRPREQ (73 aa)). Positions 114–144 (HSLGGHGLRVRPREQKEFQSPASKSPKGVDS) are disordered. ATP is bound at residue serine 205. Positions 216 and 218 each coordinate Mg(2+). UTP contacts are provided by aspartate 216 and aspartate 218. Disordered regions lie at residues 226 to 247 (MEETEPDPKAPKVPETSSLDSA) and 259 to 335 (CTPA…ASKD). Composition is skewed to polar residues over residues 266-276 (DSLSPTSVQES) and 283-299 (TPSSLAPQTPDSALGSD). Residues 314-335 (QEDRKEGKQGKELELAEEASKD) show a composition bias toward basic and acidic residues. Residue asparagine 395 participates in ATP binding. 4 residues coordinate UTP: asparagine 395, arginine 417, tyrosine 435, and histidine 552. A PAP-associated domain is found at 494-552 (LSSLLAQFFSCVSCLDLSGSLLSLREGRPLMVAEGLPSDLWEGLRLGPMNLQDPFDLSH). A KA1; binds the bulging loops of U6 snRNA but is dispensable for terminal uridylyltransferase activity region spans residues 601–869 (SSPSSLLSAK…IPQALKNLLK (269 aa)). 4 disordered regions span residues 640-689 (QGTK…DHSE), 735-757 (MKPEVAGEGSQGETGKEASHPSS), 775-796 (ARRRLQQQTKEEGRGGPTTGAE), and 803-822 (RVTQELKGPNSEQERPPGEP). Over residues 671–689 (KSFEEGKEEPQGCAGDHSE) the composition is skewed to basic and acidic residues. Residues serine 688 and serine 744 each carry the phosphoserine modification.

It belongs to the DNA polymerase type-B-like family. As to quaternary structure, associates with the cleavage and polyadenylation specificity factor (CPSF) complex. Interacts with CPSF1 and CPSF3; the interaction is direct. Interacts with PIP5K1A. Requires Mg(2+) as cofactor. It depends on Mn(2+) as a cofactor. In terms of processing, phosphorylated by CK1 in the proline-rich (Pro-rich) region.

The protein resides in the nucleus. It is found in the nucleolus. Its subcellular location is the nucleus speckle. The catalysed reaction is RNA(n) + UTP = RNA(n)-3'-uridine ribonucleotide + diphosphate. It catalyses the reaction RNA(n) + ATP = RNA(n)-3'-adenine ribonucleotide + diphosphate. Adenylyltransferase activity is specifically phosphatidylinositol 4,5-bisphosphate (PtdIns(4,5)P2). Poly(A) polymerase that creates the 3'-poly(A) tail of specific pre-mRNAs. Localizes to nuclear speckles together with PIP5K1A and mediates polyadenylation of a select set of mRNAs, such as HMOX1. In addition to polyadenylation, it is also required for the 3'-end cleavage of pre-mRNAs: binds to the 3'UTR of targeted pre-mRNAs and promotes the recruitment and assembly of the CPSF complex on the 3'UTR of pre-mRNAs. In addition to adenylyltransferase activity, also has uridylyltransferase activity. However, the ATP ratio is higher than UTP in cells, suggesting that it functions primarily as a poly(A) polymerase. Acts as a specific terminal uridylyltransferase for U6 snRNA in vitro: responsible for a controlled elongation reaction that results in the restoration of the four 3'-terminal UMP-residues found in newly transcribed U6 snRNA. Not involved in replication-dependent histone mRNA degradation. This is Speckle targeted PIP5K1A-regulated poly(A) polymerase (Tut1) from Mus musculus (Mouse).